Reading from the N-terminus, the 429-residue chain is Prenyltransferase okaC (429 aa).

Dimethylallyl diphosphate is bound by residues R101, K189, Y191, K257, Y259, Y342, Y406, and Y410.

Belongs to the tryptophan dimethylallyltransferase family.

It carries out the reaction cyclo(L-Trp-L-Trp) + 2 dimethylallyl diphosphate = cyclo(N(8)-(alpha,alpha-dimethylallyl)-L-Trp-6a-(alpha,alpha-dimethylallyl)-L-Trp) + 2 diphosphate. Its pathway is alkaloid biosynthesis. Its function is as follows. Prenyltransferase; part of the gene cluster that mediates the biosynthesis of okaramine B, a prenylated indole alkaloid that possesses an unusual octacyclic ring system, including a four-membered azetidine ring and an eight-membered azocine ring, and that exhibits insecticidal activity against silkworm larvae. Within the pathway, okaC performs asymmetric reverse prenylation of cyclo(L-Trp-L-Trp) at N-1 and C-2' of the indole ring to produce the cyclic prenylated tryptophan dimer cyclo(N8-(alpha,alpha-dimethylallyl)-L-Trp-6a-(alpha,alpha-dime-thylallyl)-L-Trp). The biosynthesis begins with the NRPS okaA that condenses two tryptophan molecules into cyclo(L-Trp-L-Trp). Prenylation by the prenyltransferase okaC then leads to the formation of cyclo(N8-(alpha,alpha-dimethylallyl)-L-Trp-6a-(alpha,alpha-dime-thylallyl)-L-Trp). This is followed by indole 2,3-epoxidation by the FAD-dependent monooxygenase okaB to facilitate the formation of the hexahydropyrrolo[2,3-b]indole (HPI) moiety of okaramine C. The cytochrome P450 monooxygenase okaD then likely catalyzes formation of the eight-membered ring of okaramine A. The dioxygenase okaE further forms the unusual 2-dimethyl-3-methyl-azetidine ring to yield 12-deshydroxyl okaramine E, as well as the hydroxylation of 12-deshydroxyl okaramine E to produce okaramine E. The cytochrome P450 monoxygenase okaG converts 12-deshydroxyl okaramine E into 3-desmethyl okaramine B which is further methylated by the methyltransferase okaF into okaramine B. In a shunt pathway, okaG and okaF together are also able to convert okaramine E into okaramine D. Okaramine H is produced by nonenzymatic conversion from okaramine A. The polypeptide is Prenyltransferase okaC (Penicillium ochrochloron).